The primary structure comprises 171 residues: Shikimate kinase (171 aa).

14–19 (GAGKST) is a binding site for ATP. Mg(2+) is bound at residue Ser18. Positions 36, 60, and 82 each coordinate substrate. Arg120 contributes to the ATP binding site. Residue Arg139 coordinates substrate. Gln156 contacts ATP.

It belongs to the shikimate kinase family. In terms of assembly, monomer. Mg(2+) serves as cofactor.

The protein resides in the cytoplasm. The enzyme catalyses shikimate + ATP = 3-phosphoshikimate + ADP + H(+). The protein operates within metabolic intermediate biosynthesis; chorismate biosynthesis; chorismate from D-erythrose 4-phosphate and phosphoenolpyruvate: step 5/7. Catalyzes the specific phosphorylation of the 3-hydroxyl group of shikimic acid using ATP as a cosubstrate. The protein is Shikimate kinase of Shewanella baltica (strain OS195).